The primary structure comprises 648 residues: Macrolide export ATP-binding/permease protein MacB (648 aa).

The ABC transporter domain maps to 5-243 (LELCNVSRSY…QGVDAAVVNT (239 aa)). 41–48 (GVSGSGKS) contributes to the ATP binding site. The next 5 helical transmembrane spans lie at 273-293 (LLTM…VVVG), 417-437 (ANVV…IGVA), 523-543 (LFLT…VMNI), 577-597 (VLVC…IAFM), and 611-631 (LTAL…FGWL).

The protein belongs to the ABC transporter superfamily. Macrolide exporter (TC 3.A.1.122) family. Homodimer. Part of the tripartite efflux system MacAB-TolC, which is composed of an inner membrane transporter, MacB, a periplasmic membrane fusion protein, MacA, and an outer membrane component, TolC. The complex forms a large protein conduit and can translocate molecules across both the inner and outer membranes. Interacts with MacA.

It localises to the cell inner membrane. Its function is as follows. Part of the tripartite efflux system MacAB-TolC. MacB is a non-canonical ABC transporter that contains transmembrane domains (TMD), which form a pore in the inner membrane, and an ATP-binding domain (NBD), which is responsible for energy generation. Confers resistance against macrolides. In Salmonella typhi, this protein is Macrolide export ATP-binding/permease protein MacB.